Consider the following 490-residue polypeptide: Limb region 1 protein homolog (490 aa).

Residues 1 to 19 (MEGQDEVSAREQHFHSQVR) lie on the Extracellular side of the membrane. A helical transmembrane segment spans residues 20–40 (ESTICFLLFAILYVVSYFIIT). At 41-62 (RYKRKSDEQEDEDAIVNRISLF) the chain is on the cytoplasmic side. The chain crosses the membrane as a helical span at residues 63–83 (LSTFTLAVSAGAVLLLPFSII). The Extracellular segment spans residues 84 to 110 (SNEILLSFPQNYYIQWLNGSLIHGLWN). The helical transmembrane segment at 111-131 (LASLFSNLCLFVLMPFAFFFL) threads the bilayer. At 132 to 151 (ESEGFAGLKKGIRARILETL) the chain is on the cytoplasmic side. Residues 152-172 (VMLLLLALLILGIVWVASALI) form a helical membrane-spanning segment. Over 173 to 187 (DNDAASMESLYDLWE) the chain is Extracellular. A helical transmembrane segment spans residues 188–208 (FYLPYLYSCISLMGCLLLLLC). Residues 209–291 (TPVGLSRMFT…RKKASAWERN (83 aa)) are Cytoplasmic-facing. Positions 250–287 (RLNGLSSSVEYNIMELEQELENVKTLKTKLERRKKASA) form a coiled coil. The helical transmembrane segment at 292–312 (LVYPAVMVLLLIETSISVLLV) threads the bilayer. Residues 313–339 (ACNILCLLVDETAMPKGTRGPGIGNAS) lie on the Extracellular side of the membrane. Residues 340 to 360 (LSTFGFVGAALEIILIFYLMV) form a helical membrane-spanning segment. At 361–383 (SSVVGFYSLRFFGNFTPKKDDTT) the chain is on the cytoplasmic side. Residues 384 to 404 (MTKIIGNCVSILVLSSALPVM) form a helical membrane-spanning segment. The Extracellular segment spans residues 405–426 (SRTLGITRFDLLGDFGRFNWLG). The helical transmembrane segment at 427–447 (NFYIVLSYNLLFAIVTTLCLV) threads the bilayer. The Cytoplasmic portion of the chain corresponds to 448–490 (RKFTSAVREELFKALGLHKLHLPNTSRDSETAKPSVNGHQKAL).

It belongs to the LIMR family. Widely expressed with strongest expression in heart and pancreas.

It is found in the membrane. Its function is as follows. Putative membrane receptor. The sequence is that of Limb region 1 protein homolog (LMBR1) from Homo sapiens (Human).